The chain runs to 304 residues: Ribosomal protein L11 methyltransferase (304 aa).

Residues T147, G168, D190, and N238 each contribute to the S-adenosyl-L-methionine site.

It belongs to the methyltransferase superfamily. PrmA family.

The protein resides in the cytoplasm. It carries out the reaction L-lysyl-[protein] + 3 S-adenosyl-L-methionine = N(6),N(6),N(6)-trimethyl-L-lysyl-[protein] + 3 S-adenosyl-L-homocysteine + 3 H(+). In terms of biological role, methylates ribosomal protein L11. This chain is Ribosomal protein L11 methyltransferase, found in Prochlorococcus marinus (strain SARG / CCMP1375 / SS120).